Reading from the N-terminus, the 269-residue chain is Endo-1,3-1,4-beta-glycanase ExoK (269 aa).

A signal peptide spans 1–29; the sequence is MTIDRYRRFARLAFIATLPLAGLATAAAA. Positions 40–252 constitute a GH16 domain; it reads DDFDTLDTRV…RVAFTAAGDE (213 aa). Glu-138 serves as the catalytic Nucleophile. Glu-142 acts as the Proton donor in catalysis.

It belongs to the glycosyl hydrolase 16 family.

Its subcellular location is the secreted. The protein operates within glycan metabolism; exopolysaccharide biosynthesis. Its function is as follows. Cleaves high molecular weight succinoglycan to yield LMW succinoglycan. Dynamically regulates the molecular weight distribution of succinoglycan by cleaving nascent succinoglycan only during a limited period after its synthesis, perhaps before it undergoes a time-dependent change in its conformation or aggregation state. This chain is Endo-1,3-1,4-beta-glycanase ExoK (exoK), found in Rhizobium meliloti (strain 1021) (Ensifer meliloti).